Reading from the N-terminus, the 461-residue chain is Ubiquinone hydroxylase UbiM (461 aa).

Belongs to the UbiH/COQ6 family. FAD serves as cofactor.

The enzyme catalyses a 2-(all-trans-polyprenyl)phenol + NADPH + O2 + H(+) = a 3-(all-trans-polyprenyl)benzene-1,2-diol + NADP(+) + H2O. It carries out the reaction a 5-methoxy-2-methyl-3-(all-trans-polyprenyl)benzene-1,4-diol + AH2 + O2 = a 3-demethylubiquinol + A + H2O. It participates in cofactor biosynthesis; ubiquinone biosynthesis. Catalyzes the hydroxylation of three positions of the aromatic ring during ubiquinone biosynthesis. The protein is Ubiquinone hydroxylase UbiM of Neisseria meningitidis serogroup C / serotype 2a (strain ATCC 700532 / DSM 15464 / FAM18).